A 272-amino-acid polypeptide reads, in one-letter code: Alkaline ceramidase (272 aa).

2 helical membrane-spanning segments follow: residues phenylalanine 34–leucine 54 and valine 61–tyrosine 81. Residue histidine 83 participates in Zn(2+) binding. Transmembrane regions (helical) follow at residues leucine 96 to phenylalanine 116, leucine 124 to leucine 144, leucine 148 to glycine 168, and isoleucine 183 to phenylalanine 203. Residues histidine 213 and histidine 217 each coordinate Zn(2+). The helical transmembrane segment at alanine 214–isoleucine 234 threads the bilayer. An N-linked (GlcNAc...) asparagine glycan is attached at asparagine 256.

It belongs to the alkaline ceramidase family. Zn(2+) is required as a cofactor.

It localises to the membrane. The enzyme catalyses an N-acyl-sphingoid base + H2O = a sphingoid base + a fatty acid. It catalyses the reaction an N-acylsphing-4-enine + H2O = sphing-4-enine + a fatty acid. The catalysed reaction is an N-acyl-15-methylhexadecasphing-4-enine + H2O = 15-methylhexadecasphing-4-enine + a fatty acid. The protein operates within lipid metabolism; sphingolipid metabolism. Functionally, hydrolyzes the sphingolipid ceramide into sphingoid base and free fatty acid. C.elegans contain specific sphingoid bases, which are unique or different in structure compared to the sphingoid bases found in other animals. Two examples of these distinctive compounds are: 15-methylhexadecasphinganine and 15-methylhexadecasphing-4-enine. In Caenorhabditis elegans, this protein is Alkaline ceramidase.